The primary structure comprises 208 residues: Small ribosomal subunit protein uS4 (208 aa).

The S4 RNA-binding domain maps to Arg-98–Met-161.

It belongs to the universal ribosomal protein uS4 family. As to quaternary structure, part of the 30S ribosomal subunit. Contacts protein S5. The interaction surface between S4 and S5 is involved in control of translational fidelity.

Functionally, one of the primary rRNA binding proteins, it binds directly to 16S rRNA where it nucleates assembly of the body of the 30S subunit. In terms of biological role, with S5 and S12 plays an important role in translational accuracy. The sequence is that of Small ribosomal subunit protein uS4 from Helicobacter acinonychis (strain Sheeba).